The following is a 70-amino-acid chain: Small ribosomal subunit protein bS21B (70 aa).

Belongs to the bacterial ribosomal protein bS21 family.

In Rhizobium meliloti (strain 1021) (Ensifer meliloti), this protein is Small ribosomal subunit protein bS21B (rpsU2).